Reading from the N-terminus, the 316-residue chain is Methionyl-tRNA formyltransferase (316 aa).

109-112 (SLLP) lines the (6S)-5,6,7,8-tetrahydrofolate pocket.

It belongs to the Fmt family.

It carries out the reaction L-methionyl-tRNA(fMet) + (6R)-10-formyltetrahydrofolate = N-formyl-L-methionyl-tRNA(fMet) + (6S)-5,6,7,8-tetrahydrofolate + H(+). Attaches a formyl group to the free amino group of methionyl-tRNA(fMet). The formyl group appears to play a dual role in the initiator identity of N-formylmethionyl-tRNA by promoting its recognition by IF2 and preventing the misappropriation of this tRNA by the elongation apparatus. In Idiomarina loihiensis (strain ATCC BAA-735 / DSM 15497 / L2-TR), this protein is Methionyl-tRNA formyltransferase.